A 351-amino-acid chain; its full sequence is MTKSVDYQLIAATFSTGLLASSSIVWSYIFATVFSFSSMLTWQSVLYVWSLPIVQLAAIFCAVRVNFSRLGLLLLLNCGIAFLSFISWSLNWSISVLVPGLFVINFLSLMIWLIVCFDVVYLCPEIYHKYFELGFLASLTIHYCFNQFEIYLTNVMFAPFFICMLFGYIGFSHVWRHDMYIFGKMRCKPIYYTKRAKYIAFSAWQIMDVALFELICLWFLLLAMAAGCIALVMFSEVFLGVSTYLYLFMVGNFCCGSLIIYRSYVMTAVYSVVSLTAFFLILMGGYLFTKAQLSMLAAVMFFCYFHANGCLLYRIKKKLHRNITTPRFILNVCMLLNALLEITVLLAQKLT.

The next 11 membrane-spanning stretches (helical) occupy residues 14–34, 43–63, 70–90, 97–117, 133–153, 155–175, 214–234, 240–260, 268–288, 293–313, and 328–348; these read FSTG…ATVF, QSVL…FCAV, LGLL…SWSL, LVPG…IVCF, LGFL…IYLT, VMFA…SHVW, LICL…LVMF, GVST…SLII, AVYS…GYLF, LSML…CLLY, and FILN…LLAQ.

This sequence belongs to the herpesviridae BMRF2 family.

The protein resides in the host membrane. The sequence is that of Gene 58 protein (58) from Connochaetes taurinus (Blue wildebeest).